Consider the following 1220-residue polypeptide: Deubiquitinating protein VCPIP1 (1220 aa).

The segment covering 1-19 has biased composition (pro residues); that stretch reads MSQPPPPPPLPPPPPPPEA. Residues 1 to 40 form a disordered region; sequence MSQPPPPPPLPPPPPPPEAPQTSSSLAAAASPGGLSKRRD. The segment covering 20-35 has biased composition (low complexity); the sequence is PQTSSSLAAAASPGGL. The region spanning 207-360 is the OTU domain; that stretch reads LIPVHVDGDG…RNHYIPLVGI (154 aa). The active site involves Asp215. Cys218 (nucleophile) is an active-site residue. Residue His353 is part of the active site. Lys407 is modified (N6-acetyllysine). 2 disordered regions span residues 724–778 and 988–1008; these read SVMQ…KIRI and EATT…LGSG. Phosphoserine is present on residues Ser746 and Ser756. Residues 754 to 770 are compositionally biased toward low complexity; it reads PSSAPATPTKAPYSPTT. At Thr762 the chain carries Phosphothreonine. Ser767, Ser993, Ser997, and Ser1076 each carry phosphoserine. 2 disordered regions span residues 1113–1140 and 1185–1220; these read SSIQ…QRKV and FATR…MDHS. Phosphoserine is present on residues Ser1196 and Ser1205. The span at 1197–1207 shows a compositional bias: acidic residues; it reads MEEPEEMDSQD. Residues 1208–1220 show a composition bias toward polar residues; that stretch reads AETTNTTEPMDHS.

In terms of assembly, binds VCP and the ternary complex containing STX5A, NSFL1C and VCP. Post-translationally, phosphorylated at Ser-1205 by ATM or ATR following induction of covalent DNA-protein cross-links (DPCs).

The protein localises to the nucleus. It is found in the cytoplasm. The protein resides in the endoplasmic reticulum. It localises to the golgi apparatus. Its subcellular location is the golgi stack. The catalysed reaction is Thiol-dependent hydrolysis of ester, thioester, amide, peptide and isopeptide bonds formed by the C-terminal Gly of ubiquitin (a 76-residue protein attached to proteins as an intracellular targeting signal).. Deubiquitinating enzyme involved in DNA repair and reassembly of the Golgi apparatus and the endoplasmic reticulum following mitosis. Necessary for VCP-mediated reassembly of Golgi stacks after mitosis. Plays a role in VCP-mediated formation of transitional endoplasmic reticulum (tER). Mediates dissociation of the ternary complex containing STX5A, NSFL1C and VCP. Also involved in DNA repair following phosphorylation by ATM or ATR: acts by catalyzing deubiquitination of SPRTN, thereby promoting SPRTN recruitment to chromatin and subsequent proteolytic cleavage of covalent DNA-protein cross-links (DPCs). Hydrolyzes 'Lys-11'- and 'Lys-48'-linked polyubiquitin chains. This is Deubiquitinating protein VCPIP1 from Mus musculus (Mouse).